The chain runs to 75 residues: Small ribosomal subunit protein bS21A (75 aa).

It belongs to the bacterial ribosomal protein bS21 family.

The sequence is that of Small ribosomal subunit protein bS21A (rpsU1) from Agrobacterium fabrum (strain C58 / ATCC 33970) (Agrobacterium tumefaciens (strain C58)).